Reading from the N-terminus, the 190-residue chain is Crossover junction endodeoxyribonuclease RuvC (190 aa).

Residues aspartate 8, glutamate 67, and aspartate 139 contribute to the active site. The Mg(2+) site is built by aspartate 8, glutamate 67, and aspartate 139.

Belongs to the RuvC family. Homodimer which binds Holliday junction (HJ) DNA. The HJ becomes 2-fold symmetrical on binding to RuvC with unstacked arms; it has a different conformation from HJ DNA in complex with RuvA. In the full resolvosome a probable DNA-RuvA(4)-RuvB(12)-RuvC(2) complex forms which resolves the HJ. Requires Mg(2+) as cofactor.

The protein localises to the cytoplasm. It carries out the reaction Endonucleolytic cleavage at a junction such as a reciprocal single-stranded crossover between two homologous DNA duplexes (Holliday junction).. The RuvA-RuvB-RuvC complex processes Holliday junction (HJ) DNA during genetic recombination and DNA repair. Endonuclease that resolves HJ intermediates. Cleaves cruciform DNA by making single-stranded nicks across the HJ at symmetrical positions within the homologous arms, yielding a 5'-phosphate and a 3'-hydroxyl group; requires a central core of homology in the junction. The consensus cleavage sequence is 5'-(A/T)TT(C/G)-3'. Cleavage occurs on the 3'-side of the TT dinucleotide at the point of strand exchange. HJ branch migration catalyzed by RuvA-RuvB allows RuvC to scan DNA until it finds its consensus sequence, where it cleaves and resolves the cruciform DNA. The polypeptide is Crossover junction endodeoxyribonuclease RuvC (Haemophilus influenzae (strain ATCC 51907 / DSM 11121 / KW20 / Rd)).